Consider the following 238-residue polypeptide: Large ribosomal subunit protein uL2 (238 aa).

The interval 199–238 (PHGGGLHQSVSRPSTVSRNAPPGRKVGHIAARRTGRKEGA) is disordered. The span at 206–216 (QSVSRPSTVSR) shows a compositional bias: polar residues. Residues 223-238 (KVGHIAARRTGRKEGA) are compositionally biased toward basic residues.

The protein belongs to the universal ribosomal protein uL2 family. In terms of assembly, part of the 50S ribosomal subunit. Forms a bridge to the 30S subunit in the 70S ribosome.

In terms of biological role, one of the primary rRNA binding proteins. Required for association of the 30S and 50S subunits to form the 70S ribosome, for tRNA binding and peptide bond formation. It has been suggested to have peptidyltransferase activity; this is somewhat controversial. Makes several contacts with the 16S rRNA in the 70S ribosome. This Sulfurisphaera tokodaii (strain DSM 16993 / JCM 10545 / NBRC 100140 / 7) (Sulfolobus tokodaii) protein is Large ribosomal subunit protein uL2.